We begin with the raw amino-acid sequence, 176 residues long: Peptide methionine sulfoxide reductase MsrA (176 aa).

Residue cysteine 12 is part of the active site.

This sequence belongs to the MsrA Met sulfoxide reductase family.

The catalysed reaction is L-methionyl-[protein] + [thioredoxin]-disulfide + H2O = L-methionyl-(S)-S-oxide-[protein] + [thioredoxin]-dithiol. The enzyme catalyses [thioredoxin]-disulfide + L-methionine + H2O = L-methionine (S)-S-oxide + [thioredoxin]-dithiol. Its function is as follows. Has an important function as a repair enzyme for proteins that have been inactivated by oxidation. Catalyzes the reversible oxidation-reduction of methionine sulfoxide in proteins to methionine. This is Peptide methionine sulfoxide reductase MsrA from Thermus thermophilus (strain ATCC 27634 / DSM 579 / HB8).